A 538-amino-acid chain; its full sequence is CTP synthase (538 aa).

The tract at residues 1 to 266 (MRTKYIFITG…DQKIVDLLNI (266 aa)) is amidoligase domain. Ser14 is a CTP binding site. Ser14 contributes to the UTP binding site. ATP is bound by residues 15–20 (SLGKGL) and Asp72. Positions 72 and 140 each coordinate Mg(2+). Residues 147 to 149 (DIE), 187 to 192 (KTKPTQ), and Lys223 contribute to the CTP site. UTP-binding positions include 187 to 192 (KTKPTQ) and Lys223. Position 239-241 (239-241 (KDV)) interacts with ATP. The 243-residue stretch at 291–533 (NIAIVGKYVN…IEAALRYRKK (243 aa)) folds into the Glutamine amidotransferase type-1 domain. Gly353 contacts L-glutamine. Cys380 serves as the catalytic Nucleophile; for glutamine hydrolysis. L-glutamine is bound by residues 381 to 384 (LGMQ), Glu404, and Arg461. Residues His506 and Glu508 contribute to the active site.

It belongs to the CTP synthase family. Homotetramer.

The enzyme catalyses UTP + L-glutamine + ATP + H2O = CTP + L-glutamate + ADP + phosphate + 2 H(+). It carries out the reaction L-glutamine + H2O = L-glutamate + NH4(+). It catalyses the reaction UTP + NH4(+) + ATP = CTP + ADP + phosphate + 2 H(+). Its pathway is pyrimidine metabolism; CTP biosynthesis via de novo pathway; CTP from UDP: step 2/2. Its activity is regulated as follows. Allosterically activated by GTP, when glutamine is the substrate; GTP has no effect on the reaction when ammonia is the substrate. The allosteric effector GTP functions by stabilizing the protein conformation that binds the tetrahedral intermediate(s) formed during glutamine hydrolysis. Inhibited by the product CTP, via allosteric rather than competitive inhibition. Its function is as follows. Catalyzes the ATP-dependent amination of UTP to CTP with either L-glutamine or ammonia as the source of nitrogen. Regulates intracellular CTP levels through interactions with the four ribonucleotide triphosphates. The chain is CTP synthase from Syntrophus aciditrophicus (strain SB).